The chain runs to 154 residues: Large ribosomal subunit protein uL13 (154 aa).

It belongs to the universal ribosomal protein uL13 family. In terms of assembly, part of the 50S ribosomal subunit.

Its function is as follows. This protein is one of the early assembly proteins of the 50S ribosomal subunit, although it is not seen to bind rRNA by itself. It is important during the early stages of 50S assembly. This is Large ribosomal subunit protein uL13 from Allorhizobium ampelinum (strain ATCC BAA-846 / DSM 112012 / S4) (Agrobacterium vitis (strain S4)).